Consider the following 480-residue polypeptide: MFS-type transporter oryF (480 aa).

Residues methionine 1–arginine 10 are compositionally biased toward basic and acidic residues. Residues methionine 1–glutamate 24 form a disordered region. The segment covering leucine 11 to leucine 22 has biased composition (low complexity). 12 helical membrane passes run leucine 41–valine 61, alanine 81–serine 101, isoleucine 107–alanine 127, phenylalanine 138–leucine 158, leucine 170–valine 190, alanine 197–leucine 217, phenylalanine 264–leucine 284, alanine 308–leucine 328, isoleucine 351–alanine 371, isoleucine 378–isoleucine 398, glycine 415–isoleucine 435, and tryptophan 443–leucine 463.

Belongs to the major facilitator superfamily.

The protein resides in the membrane. Its function is as follows. MFS-type transporter; part of the gene cluster that mediates the biosynthesis of oryzines, natural products with an unusual maleidride backbone. In Aspergillus oryzae (strain ATCC 42149 / RIB 40) (Yellow koji mold), this protein is MFS-type transporter oryF.